Reading from the N-terminus, the 146-residue chain is Large ribosomal subunit protein bL9 (146 aa).

This sequence belongs to the bacterial ribosomal protein bL9 family. Part of the 50S ribosomal subunit. Contacts protein L31.

Binds to the 23S rRNA and protein L31. The protein is Large ribosomal subunit protein bL9 (rplI) of Deinococcus radiodurans (strain ATCC 13939 / DSM 20539 / JCM 16871 / CCUG 27074 / LMG 4051 / NBRC 15346 / NCIMB 9279 / VKM B-1422 / R1).